Here is a 303-residue protein sequence, read N- to C-terminus: Hydroxyethylthiazole kinase (303 aa).

Polar residues predominate over residues 1–15; it reads MTTASTTPNSDTSNL. The segment at 1 to 23 is disordered; it reads MTTASTTPNSDTSNLHEVAPDDP. Met67 is a binding site for substrate. ATP-binding residues include Arg142 and Ser206. Gly233 provides a ligand contact to substrate.

This sequence belongs to the Thz kinase family. It depends on Mg(2+) as a cofactor.

It carries out the reaction 5-(2-hydroxyethyl)-4-methylthiazole + ATP = 4-methyl-5-(2-phosphooxyethyl)-thiazole + ADP + H(+). It functions in the pathway cofactor biosynthesis; thiamine diphosphate biosynthesis; 4-methyl-5-(2-phosphoethyl)-thiazole from 5-(2-hydroxyethyl)-4-methylthiazole: step 1/1. Functionally, catalyzes the phosphorylation of the hydroxyl group of 4-methyl-5-beta-hydroxyethylthiazole (THZ). This chain is Hydroxyethylthiazole kinase, found in Bifidobacterium animalis subsp. lactis (strain AD011).